Here is a 551-residue protein sequence, read N- to C-terminus: Endolytic murein transglycosylase (551 aa).

Over 1–187 the chain is Cytoplasmic; sequence MSEKSREEEK…PKKEKKSHVK (187 aa). A disordered region spans residues 38–180; the sequence is VRTPANEPSA…EGAKPAKPKK (143 aa). Composition is skewed to low complexity over residues 100 to 110 and 145 to 157; these read PSSPAEESGSR and QAGP…ATET. Over residues 159 to 174 the composition is skewed to basic and acidic residues; it reads DIIRDTSRRSRREGAK. Residues 188 to 208 traverse the membrane as a helical segment; sequence AFVISFLVFLALLSAGGYFGY. The Extracellular portion of the chain corresponds to 209 to 551; that stretch reads QYVLDSLLPI…VAEHVNSKLN (343 aa).

Belongs to the transglycosylase MltG family.

The protein localises to the cell membrane. The catalysed reaction is a peptidoglycan chain = a peptidoglycan chain with N-acetyl-1,6-anhydromuramyl-[peptide] at the reducing end + a peptidoglycan chain with N-acetylglucosamine at the non-reducing end.. Functionally, functions as a peptidoglycan terminase that cleaves nascent peptidoglycan strands endolytically to terminate their elongation. Involved in peripheral peptidoglycan (PG) synthesis. In Streptococcus pneumoniae serotype 2 (strain D39 / NCTC 7466), this protein is Endolytic murein transglycosylase.